We begin with the raw amino-acid sequence, 493 residues long: Transcript termination protein OPG145 (493 aa).

One can recognise a Helicase ATP-binding domain in the interval 100-256 (MIESKRPLYI…NSIINIAKLS (157 aa)). 113-120 (LACGFGKT) contributes to the ATP binding site. Residues 206–209 (DESH) carry the DESH box motif. The Helicase C-terminal domain occupies 309 to 456 (ILDTLVEEFK…IISLSVDKLG (148 aa)).

This sequence belongs to the helicase family. Poxviruses subfamily. In terms of assembly, interacts with OPG087. Might be part of a transcription complex composed at least of OPG087, OPG110, and OPG145.

It localises to the virion. DNA helicase which seems to act as a postreplicative transcription termination factor. Involved in ATP-dependent release of nascent RNA. Forms a stable complex with single-stranded DNA, and to a lesser extent RNA. In Homo sapiens (Human), this protein is Transcript termination protein OPG145 (OPG145).